Consider the following 549-residue polypeptide: Glucose-6-phosphate isomerase (549 aa).

Glu-355 acts as the Proton donor in catalysis. Residues His-386 and Lys-514 contribute to the active site.

Belongs to the GPI family.

It is found in the cytoplasm. It catalyses the reaction alpha-D-glucose 6-phosphate = beta-D-fructose 6-phosphate. It participates in carbohydrate biosynthesis; gluconeogenesis. Its pathway is carbohydrate degradation; glycolysis; D-glyceraldehyde 3-phosphate and glycerone phosphate from D-glucose: step 2/4. Functionally, catalyzes the reversible isomerization of glucose-6-phosphate to fructose-6-phosphate. The chain is Glucose-6-phosphate isomerase from Salmonella agona (strain SL483).